A 122-amino-acid chain; its full sequence is Large ribosomal subunit protein uL14 (122 aa).

Belongs to the universal ribosomal protein uL14 family. As to quaternary structure, part of the 50S ribosomal subunit. Forms a cluster with proteins L3 and L19. In the 70S ribosome, L14 and L19 interact and together make contacts with the 16S rRNA in bridges B5 and B8.

Binds to 23S rRNA. Forms part of two intersubunit bridges in the 70S ribosome. The sequence is that of Large ribosomal subunit protein uL14 from Spiroplasma citri.